An 859-amino-acid chain; its full sequence is Active breakpoint cluster region-related protein (859 aa).

The segment at 26–84 is disordered; that stretch reads TDEYDGEGNEEQKGPPEGSETMPYIDESPTMSPQLSARSQGGGDGVSPTPPEGLAPGVE. Residues 54-64 show a composition bias toward polar residues; sequence PTMSPQLSARS. Residue Ser57 is modified to Phosphoserine. In terms of domain architecture, DH spans 91–284; sequence MRKLVLSGFL…QNFLSSINED (194 aa). Positions 301–459 constitute a PH domain; sequence QLVKDGFLVE…WREAIQKLQK (159 aa). A C2 domain is found at 484 to 613; it reads TVHNIPVTSN…ETKNWHTDVI (130 aa). Residues 647–845 enclose the Rho-GAP domain; the sequence is VKISVVTKRE…YYLQHPPISF (199 aa).

In terms of assembly, interacts with DLG4. As to expression, highly enriched in the brain. Much weaker expression in heart, lung and muscle.

It localises to the cell projection. Its subcellular location is the dendritic spine. The protein localises to the axon. It is found in the synapse. In terms of biological role, protein with a unique structure having two opposing regulatory activities toward small GTP-binding proteins. The C-terminus is a GTPase-activating protein domain which stimulates GTP hydrolysis by RAC1, RAC2 and CDC42. Accelerates the intrinsic rate of GTP hydrolysis of RAC1 or CDC42, leading to down-regulation of the active GTP-bound form. The central Dbl homology (DH) domain functions as a guanine nucleotide exchange factor (GEF) that modulates the GTPases CDC42, RHOA and RAC1. Promotes the conversion of CDC42, RHOA and RAC1 from the GDP-bound to the GTP-bound form. Functions as an important negative regulator of neuronal RAC1 activity. Regulates macrophage functions such as CSF-1 directed motility and phagocytosis through the modulation of RAC1 activity. The polypeptide is Active breakpoint cluster region-related protein (Homo sapiens (Human)).